The chain runs to 288 residues: Small ribosomal subunit protein uS3 (288 aa).

The 69-residue stretch at 38–106 folds into the KH type-2 domain; it reads IRRMMSKGLE…QVQLNIIEVK (69 aa). Positions 209-288 are disordered; the sequence is PGRETPAEAP…TQPAETQQEG (80 aa). Residues 219–232 are compositionally biased toward basic and acidic residues; sequence SRPRRERGDRSERP. A compositionally biased stretch (low complexity) spans 249 to 264; sequence AGRAAATTIAQAAETP. Polar residues predominate over residues 277 to 288; it reads AATQPAETQQEG.

It belongs to the universal ribosomal protein uS3 family. As to quaternary structure, part of the 30S ribosomal subunit. Forms a tight complex with proteins S10 and S14.

Functionally, binds the lower part of the 30S subunit head. Binds mRNA in the 70S ribosome, positioning it for translation. The polypeptide is Small ribosomal subunit protein uS3 (Salinispora tropica (strain ATCC BAA-916 / DSM 44818 / JCM 13857 / NBRC 105044 / CNB-440)).